We begin with the raw amino-acid sequence, 1637 residues long: Kinesin-like protein KIF21B (1637 aa).

Residues 8–370 (CVKVAVRIRP…LKYANRARNI (363 aa)) form the Kinesin motor domain. Position 87–94 (87–94 (GQTGAGKT)) interacts with ATP. Coiled coils occupy residues 376–604 (VNQD…EEEG) and 631–824 (NFQA…ALRR). The segment at 400 to 1099 (MEYKAGKRVI…LQALIYNVQQ (700 aa)) is interaction with TRIM3. Positions 509-533 (ASARSPYSLGASPAAPAFGGSPASS) are enriched in low complexity. Disordered regions lie at residues 509 to 538 (ASAR…EDAS) and 552 to 628 (KKKE…PEEK). Acidic residues predominate over residues 578-627 (NSEETDENEAEEEEEERDESGCEEEEGREDEDEDSGSEESLVDSDSDPEE). A Phosphoserine modification is found at Ser579. Thr582 carries the post-translational modification Phosphothreonine. Disordered regions lie at residues 830–865 (SERV…GARS) and 880–906 (FLGD…GASQ). A compositionally biased stretch (low complexity) spans 846–865 (SGAEVSASTTSSEAESGARS). Positions 928 to 1016 (MQRMTIVNLE…EETKEELDST (89 aa)) form a coiled coil. Residues Ser1149, Ser1167, and Ser1215 each carry the phosphoserine modification. The segment covering 1194–1217 (RTVSLPTRGSTFPRQSRATETSPL) has biased composition (polar residues). The disordered stretch occupies residues 1194-1251 (RTVSLPTRGSTFPRQSRATETSPLTRRKSYDRGQPIRSTDVGFTPPSSPPTRPRNDRN). Position 1237 is a phosphothreonine (Thr1237). Ser1241 carries the phosphoserine modification. WD repeat units lie at residues 1306–1343 (GHTK…EIAA), 1346–1384 (GHPN…KCIR), 1410–1448 (QGEH…PVGK), 1451–1493 (GHIG…TGTI), 1502–1539 (PHYD…LIQQ), 1543–1582 (AHKD…PIGE), and 1585–1622 (GHDS…TPCL).

This sequence belongs to the TRAFAC class myosin-kinesin ATPase superfamily. Kinesin family. As to quaternary structure, interacts with TRIM3; the interaction positively affects motility of KIF21B. Interacts with GABARAP and GABA(A) receptor subunits: GABRG2, GABRA1 and GABRA2. May interact with GABA(A) receptor subunits: GABRB2 and GABRB3.

Its subcellular location is the cytoplasm. The protein localises to the cytoskeleton. It is found in the cell projection. It localises to the dendrite. The protein resides in the growth cone. Its subcellular location is the axon. The protein localises to the cytoplasmic vesicle. In terms of biological role, plus-end directed microtubule-dependent motor protein which displays processive activity. Is involved in regulation of microtubule dynamics, synapse function and neuronal morphology, including dendritic tree branching and spine formation. Plays a role in lerning and memory. Involved in delivery of gamma-aminobutyric acid (GABA(A)) receptor to cell surface. The sequence is that of Kinesin-like protein KIF21B (KIF21B) from Homo sapiens (Human).